The primary structure comprises 2226 residues: Histone-lysine N-methyltransferase ash1 (2226 aa).

The tract at residues 1–145 is disordered; the sequence is MSCSQNETAA…SDSEDDLPLK (145 aa). Residues 32-52 show a composition bias toward polar residues; the sequence is ITDQSSQSKSIKSATQFSVQR. Positions 99–111 are enriched in basic residues; that stretch reads AVSKKVKVKRKKL. Ser135, Ser136, and Ser138 each carry phosphoserine. Thr200 and Thr201 each carry phosphothreonine. Over residues 260-269 the composition is skewed to basic residues; it reads PRKRRGRPKK. 5 disordered regions span residues 260–324, 343–367, 673–695, 711–749, and 811–832; these read PRKR…IASS, RVLYPPPRSKRRQNNKKTACSSSNK, AQQLTLNGGGPASTLSKPLKRGL, SASASGTPNGSGSSNGNTKRRHKKSQSNDSSSPDDHKLP, and KRHLLEQPTSVSGAGSSASNSP. A DNA-binding region (a.T hook 1) is located at residues 261 to 273; the sequence is RKRRGRPKKVVPT. Residues 294–306 are compositionally biased toward low complexity; it reads STTSTTQSTTPSP. Polar residues predominate over residues 307–324; sequence KMQNENAVPTGSLPIASS. Over residues 711–727 the composition is skewed to low complexity; the sequence is SASASGTPNGSGSSNGN. Phosphoserine is present on residues Ser740, Ser831, and Ser977. Residues 820–831 show a composition bias toward low complexity; sequence SVSGAGSSASNS. Disordered regions lie at residues 980 to 1026 and 1049 to 1230; these read QQTT…DCER and SVVA…TTSL. The segment covering 989–999 has biased composition (acidic residues); sequence HEPEFDPDDEP. 2 consecutive DNA-binding regions (a.T hook) follow at residues 1065 to 1077 and 1095 to 1107; these read GRPRGRKPKNREQ and AKKRGRQPKQPVL. Positions 1108-1117 are enriched in pro residues; the sequence is EEPPPTPPPQ. Over residues 1186–1200 the composition is skewed to basic and acidic residues; that stretch reads AEAKRLDSIPTEHDP. The span at 1205-1219 shows a compositional bias: polar residues; that stretch reads ESHNPGPQDYASCSE. Residues 1339 to 1387 form the AWS domain; that stretch reads FDHPTCNCKNQGEKSCLDNCLNRMVYTECSPSNCPAGEKCRNQKIQRHA. The SET domain occupies 1390–1506; it reads PGVERFMTAD…EGEELTYDYN (117 aa). The 17-residue stretch at 1514–1530 folds into the Post-SET domain; it reads EGQPCRCNTPQCRGVIG. 2 disordered regions span residues 1536–1575 and 1616–1648; these read VKPLPAVEAKPSGEGLSGRNGRQRKQKAKKHAQRQAGKDI and RASDAAATASSPALGTTNGDIPGRRPSTPSSPS. Basic residues predominate over residues 1556-1568; it reads GRQRKQKAKKHAQ. Composition is skewed to low complexity over residues 1619-1628 and 1639-1648; these read DAAATASSPA and RRPSTPSSPS. The Bromo domain maps to 1681–1789; the sequence is KMAVVLRDIC…DSYEQQKIAS (109 aa). The tract at residues 1808-1839 is disordered; that stretch reads PKEVLSSEEEPGKIAVKKSPGAKERDSPIVPL. The PHD-type zinc-finger motif lies at 1857-1903; it reads VIRCICGLYKDEGLMIQCSKCMVWQHTECTKADIDADNYQCERCEPR. The BAH domain maps to 1952–2072; sequence KVLPTKKHTY…KTARFFSKAK (121 aa). The interval 2205–2226 is disordered; that stretch reads SGRGARQRKTQQSSSSSTANST. Over residues 2214 to 2226 the composition is skewed to low complexity; that stretch reads TQQSSSSSTANST.

It belongs to the class V-like SAM-binding methyltransferase superfamily. Histone-lysine methyltransferase family. SET2 subfamily. Component of a large multiprotein complex distinct from complexes containing ash2 or brm. Interacts (via SET domain) with trx (via SET domain). Interacts with nej/cbp. Expressed throughout development but is present at higher levels during the embryonic and pupal stages than during the larval stages. During the larval stages it accumulates primarily in imaginal disks.

The protein resides in the nucleus. The protein localises to the chromosome. The enzyme catalyses L-lysyl(4)-[histone H3] + 3 S-adenosyl-L-methionine = N(6),N(6),N(6)-trimethyl-L-lysyl(4)-[histone H3] + 3 S-adenosyl-L-homocysteine + 3 H(+). Trithorax group (TrxG) protein that has histone methyltransferase activity. Specifically trimethylates 'Lys-4' of histone H3 (H3K4me3), a specific tag for epigenetic transcriptional activation. TrxG proteins are generally required to maintain the transcriptionally active state of homeotic genes throughout development. Does not act as a coactivator required for transcriptional activation, but specifically prevents inappropriate Polycomb Group (PcG) silencing of homeotic genes in cells in which they must stay transcriptionally active. The sequence is that of Histone-lysine N-methyltransferase ash1 (ash1) from Drosophila melanogaster (Fruit fly).